The chain runs to 1979 residues: E3 ubiquitin-protein ligase TTC3 (1979 aa).

The interaction with POLG stretch occupies residues 1-230 (MDDFAEGGLS…RHSCMQCVKQ (230 aa)). TPR repeat units follow at residues 231–264 (GELM…RPEN) and 266–298 (LLYG…KNTW). At Ser378 the chain carries Phosphoserine. A disordered region spans residues 422-457 (CDCHPEFLPPPSQPPRHKGKQKSRNNESEKPSFNSE). 2 TPR repeats span residues 536 to 572 (VLVV…YPNE) and 576 to 609 (CLAY…ISRL). A disordered region spans residues 783–811 (LAQERMEEDLRESNPPKNEEPEETSDSAQ). A Phosphoserine modification is found at Ser1009. 7 disordered regions span residues 1021–1067 (NKGK…GPFA), 1214–1289 (QPDV…EEAK), 1402–1427 (QGSA…SSDS), 1574–1601 (KNDG…DEKT), 1757–1776 (MDSA…GSPT), 1788–1821 (KGAS…KKPS), and 1873–1927 (DEQK…PAPD). Positions 1036 to 1050 (VGSGAASVAPSSEAV) are enriched in low complexity. Ser1060 carries the post-translational modification Phosphoserine. Residues 1214 to 1227 (QPDVKSEALSEDVK) are compositionally biased toward basic and acidic residues. Residues 1248-1257 (DSDSSSGSAS) are compositionally biased toward low complexity. Positions 1576 to 1586 (DGFDKECEPHP) are enriched in basic and acidic residues. Composition is skewed to polar residues over residues 1788–1799 (KGASQVSPSEQS) and 1808–1821 (GQAT…KKPS). Ser1794 carries the post-translational modification Phosphoserine. The span at 1873 to 1890 (DEQKKKKPNPGKDKKTSE) shows a compositional bias: basic and acidic residues. The RING-type; atypical zinc finger occupies 1931–1971 (CEICHEIFKSKNMRVLKCGHKFHKGCFKQWLKGQSTCPTCG).

In terms of assembly, interacts (when phosphorylated on Ser-378) with AKT1, AKT2 and AKT3 (when phosphorylated). Interacts with CIT. Interacts with POLG. Interacts with HSP70. Interacts with SMURF2. Post-translationally, phosphorylation on Ser-378 by Akt is required for ubiquitin ligase activity. Proteolytically cleaved into differently sized N- and C-terminal fragments.

The protein localises to the nucleus. Its subcellular location is the cytoplasm. The protein resides in the golgi apparatus. It catalyses the reaction S-ubiquitinyl-[E2 ubiquitin-conjugating enzyme]-L-cysteine + [acceptor protein]-L-lysine = [E2 ubiquitin-conjugating enzyme]-L-cysteine + N(6)-ubiquitinyl-[acceptor protein]-L-lysine.. Its pathway is protein modification; protein ubiquitination. Its function is as follows. E3 ubiquitin-protein ligase which catalyzes the formation of 'Lys-48'-polyubiquitin chains. Mediates the ubiquitination and subsequent degradation of phosphorylated Akt (AKT1, AKT2 and AKT3) in the nucleus. Acts as a terminal regulator of Akt signaling after activation; its phosphorylation by Akt, which is a prerequisite for ubiquitin ligase activity, suggests the existence of a regulation mechanism required to control Akt levels after activation. Positively regulates TGFB1-induced epithelial-mesenchymal transition and myofibroblast differentiation by mediating the ubiquitination and subsequent degradation of SMURF2. Regulates neuronal differentiation by regulating actin remodeling and Golgi organization via a signaling cascade involving RHOA, CIT and ROCK. Inhibits cell proliferation. The chain is E3 ubiquitin-protein ligase TTC3 (Ttc3) from Mus musculus (Mouse).